The sequence spans 137 residues: Small ribosomal subunit protein uS11 (137 aa).

The interval 116 to 137 (EDVTPIPHDGTRPKGGRRGRRV) is disordered.

Belongs to the universal ribosomal protein uS11 family. As to quaternary structure, part of the 30S ribosomal subunit.

Its function is as follows. Located on the platform of the 30S subunit. This chain is Small ribosomal subunit protein uS11, found in Pyrococcus furiosus (strain ATCC 43587 / DSM 3638 / JCM 8422 / Vc1).